A 268-amino-acid polypeptide reads, in one-letter code: MKVKVAILGCSGRMGRNLIQAAHEHASIELVGGSVRTSSSFVDFDLGELAGIGAIGIKTSTTLAQLATADVFIDFTSIETTLENLTWCNENKKALVIGTTGFSDEQVQVIEQAGKTMSVILAPNTSVGVNLMFKLLQVTAKAIGDYTDIEIFEAHHRFKKDAPSGTAVKMGQVIADTLGRDLNKVAVYGREGITGERDRETIGFATVRAGDIVGEHTAFFADLGERLEITHKASSRMTFALGAMRAAFWLKDADAGFYDMQDVLGLKD.

9-14 is a binding site for NAD(+); that stretch reads GCSGRM. Residue arginine 36 participates in NADP(+) binding. NAD(+) is bound by residues 98-100 and 122-125; these read GTT and APNT. The active-site Proton donor/acceptor is histidine 155. Histidine 156 lines the (S)-2,3,4,5-tetrahydrodipicolinate pocket. The active-site Proton donor is lysine 159. 165–166 contributes to the (S)-2,3,4,5-tetrahydrodipicolinate binding site; the sequence is GT.

Belongs to the DapB family.

It localises to the cytoplasm. It catalyses the reaction (S)-2,3,4,5-tetrahydrodipicolinate + NAD(+) + H2O = (2S,4S)-4-hydroxy-2,3,4,5-tetrahydrodipicolinate + NADH + H(+). The enzyme catalyses (S)-2,3,4,5-tetrahydrodipicolinate + NADP(+) + H2O = (2S,4S)-4-hydroxy-2,3,4,5-tetrahydrodipicolinate + NADPH + H(+). It functions in the pathway amino-acid biosynthesis; L-lysine biosynthesis via DAP pathway; (S)-tetrahydrodipicolinate from L-aspartate: step 4/4. Catalyzes the conversion of 4-hydroxy-tetrahydrodipicolinate (HTPA) to tetrahydrodipicolinate. This Colwellia psychrerythraea (strain 34H / ATCC BAA-681) (Vibrio psychroerythus) protein is 4-hydroxy-tetrahydrodipicolinate reductase.